Reading from the N-terminus, the 257-residue chain is UPF0246 protein Spea_1078 (257 aa).

It belongs to the UPF0246 family.

This chain is UPF0246 protein Spea_1078, found in Shewanella pealeana (strain ATCC 700345 / ANG-SQ1).